Consider the following 183-residue polypeptide: ATP-dependent protease subunit HslV (183 aa).

Residue threonine 2 is part of the active site. Positions 157, 160, and 163 each coordinate Na(+).

This sequence belongs to the peptidase T1B family. HslV subfamily. A double ring-shaped homohexamer of HslV is capped on each side by a ring-shaped HslU homohexamer. The assembly of the HslU/HslV complex is dependent on binding of ATP.

It localises to the cytoplasm. The enzyme catalyses ATP-dependent cleavage of peptide bonds with broad specificity.. Its activity is regulated as follows. Allosterically activated by HslU binding. Protease subunit of a proteasome-like degradation complex believed to be a general protein degrading machinery. This Vibrio parahaemolyticus serotype O3:K6 (strain RIMD 2210633) protein is ATP-dependent protease subunit HslV.